Reading from the N-terminus, the 410-residue chain is Polyprenol-phosphate-mannose-dependent alpha-(1-2)-phosphatidylinositol pentamannoside mannosyltransferase (410 aa).

10 consecutive transmembrane segments (helical) span residues 31-51 (LAPM…YLVP), 96-116 (FAAI…AFIW), 160-180 (TFDY…AVST), 188-208 (LLVG…LYFL), 214-234 (AAVA…WLVV), 276-296 (GFGP…LLAW), 306-326 (LGGI…SWTH), 328-348 (WVWL…ALRG), 351-371 (ILGW…LSFA), and 384-404 (LAWA…WIAF).

Belongs to the glycosyltransferase 87 family.

The protein resides in the cell membrane. The protein operates within phospholipid metabolism; phosphatidylinositol metabolism. Functionally, catalyzes the alpha-1,2 addition of a mannose residue from polyprenol-phosphate-mannose (PPM) to a monoacyl phosphatidylinositol tetramannoside (AcPIM4) to generate a monoacyl phosphatidylinositol pentamannoside (AcPIM5). This chain is Polyprenol-phosphate-mannose-dependent alpha-(1-2)-phosphatidylinositol pentamannoside mannosyltransferase, found in Mycolicibacterium smegmatis (strain ATCC 700084 / mc(2)155) (Mycobacterium smegmatis).